Here is a 367-residue protein sequence, read N- to C-terminus: Heme A synthase (367 aa).

Transmembrane regions (helical) follow at residues 26–46, 111–131, 139–159, 174–194, and 212–232; these read IRGW…VGGA, LLAR…WLTG, LPLL…WWMV, LATH…IYRG, and AGII…VAGL. A heme-binding site is contributed by His-274. Transmembrane regions (helical) follow at residues 276–296, 305–325, and 327–347; these read AGAY…LRAA, SVLL…TLLL, and VPIV…GFAI. His-335 contacts heme.

Belongs to the COX15/CtaA family. Type 2 subfamily. Interacts with CtaB. Heme b is required as a cofactor.

It is found in the cell membrane. The catalysed reaction is Fe(II)-heme o + 2 A + H2O = Fe(II)-heme a + 2 AH2. It functions in the pathway porphyrin-containing compound metabolism; heme A biosynthesis; heme A from heme O: step 1/1. In terms of biological role, catalyzes the conversion of heme O to heme A by two successive hydroxylations of the methyl group at C8. The first hydroxylation forms heme I, the second hydroxylation results in an unstable dihydroxymethyl group, which spontaneously dehydrates, resulting in the formyl group of heme A. This chain is Heme A synthase, found in Sinorhizobium fredii (strain NBRC 101917 / NGR234).